Consider the following 143-residue polypeptide: Peptide methionine sulfoxide reductase B8 (143 aa).

The MsrB domain occupies 18 to 139 (DEEWRAVLSP…NSVSLKFASA (122 aa)). Positions 57, 60, 103, and 106 each coordinate Zn(2+). A disulfide bridge links C75 with C128. The Nucleophile role is filled by C128.

Belongs to the MsrB Met sulfoxide reductase family. The cofactor is Zn(2+).

Its subcellular location is the cytoplasm. The protein localises to the cytosol. The catalysed reaction is L-methionyl-[protein] + [thioredoxin]-disulfide + H2O = L-methionyl-(R)-S-oxide-[protein] + [thioredoxin]-dithiol. In terms of biological role, catalyzes the reduction of methionine sulfoxide (MetSO) to methionine in proteins. Plays a protective role against oxidative stress by restoring activity to proteins that have been inactivated by methionine oxidation. MSRB family specifically reduces the MetSO R-enantiomer. The protein is Peptide methionine sulfoxide reductase B8 (MSRB8) of Arabidopsis thaliana (Mouse-ear cress).